Reading from the N-terminus, the 437-residue chain is Rhoptry apical surface protein 2 (437 aa).

In terms of domain architecture, C2 spans 45–179 (GCLGSLFFYL…PRINLSLHKL (135 aa)). The PH domain maps to 230-338 (EGPLERLNAN…FIEKLRAYRE (109 aa)). The interval 341–437 (STRVPSQKGA…SVVGDEEPQT (97 aa)) is disordered. Residues 375–384 (RKSGGKKSRR) are compositionally biased toward basic residues.

Interacts with RASP1. Interacts with RASP3.

The protein resides in the cytoplasmic vesicle. Its subcellular location is the secretory vesicle. It is found in the rhoptry membrane. In terms of biological role, essential for tachyzoite invasion of host cells by controlling rhoptry secretion. Binds to phosphatidic acid (PA) and phosphatidylinositol 4,5-bisphosphate (PIP2) lipids and thus, likely contributes to the assembly of the machinery that docks or primes the rhoptry to the parasite cell membrane prior to the fusion with the host cell membrane. The polypeptide is Rhoptry apical surface protein 2 (Toxoplasma gondii (strain ATCC 50853 / GT1)).